Consider the following 982-residue polypeptide: Serine/threonine-protein kinase PknD (982 aa).

Residues 51-342 form the Protein kinase domain; the sequence is YQIIKSIGKG…ELIRDIENYL (292 aa). ATP-binding positions include 57-65 and lysine 80; that span reads IGKGGMGEV. Aspartate 186 functions as the Proton acceptor in the catalytic mechanism.

It belongs to the protein kinase superfamily. Ser/Thr protein kinase family. Autophosphorylated on serine and threonine residues.

It catalyses the reaction L-seryl-[protein] + ATP = O-phospho-L-seryl-[protein] + ADP + H(+). The enzyme catalyses L-threonyl-[protein] + ATP = O-phospho-L-threonyl-[protein] + ADP + H(+). Its function is as follows. Together with the serine/threonine kinase Pkn1, may play a role in the specific interactions with host proteins during intracellular growth. The chain is Serine/threonine-protein kinase PknD from Protochlamydia amoebophila (strain UWE25).